A 158-amino-acid chain; its full sequence is Crossover junction endodeoxyribonuclease RuvC (158 aa).

Active-site residues include Asp7, Glu67, and Asp140. Mg(2+)-binding residues include Asp7, Glu67, and Asp140.

This sequence belongs to the RuvC family. As to quaternary structure, homodimer which binds Holliday junction (HJ) DNA. The HJ becomes 2-fold symmetrical on binding to RuvC with unstacked arms; it has a different conformation from HJ DNA in complex with RuvA. In the full resolvosome a probable DNA-RuvA(4)-RuvB(12)-RuvC(2) complex forms which resolves the HJ. Mg(2+) serves as cofactor.

It is found in the cytoplasm. It catalyses the reaction Endonucleolytic cleavage at a junction such as a reciprocal single-stranded crossover between two homologous DNA duplexes (Holliday junction).. Functionally, the RuvA-RuvB-RuvC complex processes Holliday junction (HJ) DNA during genetic recombination and DNA repair. Endonuclease that resolves HJ intermediates. Cleaves cruciform DNA by making single-stranded nicks across the HJ at symmetrical positions within the homologous arms, yielding a 5'-phosphate and a 3'-hydroxyl group; requires a central core of homology in the junction. The consensus cleavage sequence is 5'-(A/T)TT(C/G)-3'. Cleavage occurs on the 3'-side of the TT dinucleotide at the point of strand exchange. HJ branch migration catalyzed by RuvA-RuvB allows RuvC to scan DNA until it finds its consensus sequence, where it cleaves and resolves the cruciform DNA. This is Crossover junction endodeoxyribonuclease RuvC from Dictyoglomus turgidum (strain DSM 6724 / Z-1310).